The following is a 517-amino-acid chain: Cytochrome b mRNA maturase bI3 (517 aa).

Residues 1 to 31 (MAFRKSNVYLSLVNSYIIDSPQPSSINYWWN) are Mitochondrial matrix-facing. A cytochrome b region spans residues 1-169 (MAFRKSNVYL…DIVSWLWGGF (169 aa)). Residues 32–52 (MGSLLGLCLVIQIVTGIFMAM) form a helical membrane-spanning segment. Residues 53-84 (HYSSNIELAFSSVEHIMRDVHNGYILRYLHAN) are Mitochondrial intermembrane-facing. The chain crosses the membrane as a helical span at residues 85–105 (GASFFFMVMFMHMAKGLYYGS). Residues 106–115 (YRSPRVTLWN) are Mitochondrial matrix-facing. A helical membrane pass occupies residues 116 to 136 (VGVIIFILTIATAFLGYCCVY). The Mitochondrial intermembrane segment spans residues 137 to 145 (GQMSHWGAT). Residues 146–166 (VITNLFSAIPFVGNDIVSWLW) traverse the membrane as a helical segment. Residues 167-184 (GGFNMEDPYYSNMMLNKS) are Mitochondrial matrix-facing. Residues 170-517 (NMEDPYYSNM…NNYFKIPPKY (348 aa)) form a maturase region. Residues 185 to 205 (VLCWNIFIWMMNYYIIQLIIY) traverse the membrane as a helical segment. The Mitochondrial intermembrane portion of the chain corresponds to 206–224 (NNMIWNKNNMVKMFIMRRK). The chain crosses the membrane as a helical span at residues 225-242 (LAVINMYMYMKLIIQRTY). Residues 243 to 517 (SYYMNNTIIY…NNYFKIPPKY (275 aa)) are Mitochondrial matrix-facing.

In the N-terminal section; belongs to the cytochrome b family. The protein in the C-terminal section; belongs to the LAGLIDADG endonuclease family. As to quaternary structure, forms a ribonucleoprotein complex composed of maturase bI3 and 2 dimers of MRS1 that assemble around the bI3 RNA.

It is found in the mitochondrion inner membrane. In terms of biological role, mitochondrial mRNA maturase required for splicing of intron 3 of the cytochrome b (COB) gene, containing its own coding sequence. In vivo splicing requires the formation of a ribonucleoprotein complex together with the imported mitochondrial RNA-splicing protein MRS1. The complex seems to stimulate the intrinsic ribozyme activity of intron bI3 through binding to and stabilizing specific secondary and tertiary structure elements in the RNA. In Saccharomyces cerevisiae (strain ATCC 204508 / S288c) (Baker's yeast), this protein is Cytochrome b mRNA maturase bI3 (BI3).